The following is a 159-amino-acid chain: Succinate dehydrogenase [ubiquinone] cytochrome b small subunit, mitochondrial (159 aa).

Residues 1–56 (MAVLLKLGVLCSGQGARALSLRSRAVRPAFVSAFLQDQPTPGWRGTQHIHLSPSHQ) constitute a mitochondrion transit peptide. The Mitochondrial matrix portion of the chain corresponds to 57 to 63 (SGSKAAS). A helical transmembrane segment spans residues 64 to 85 (LHWTSERVVSVLLLGLIPAGYL). At 86 to 90 (NPCSV) the chain is on the mitochondrial intermembrane side. The chain crosses the membrane as a helical span at residues 91–111 (VDYSLAAALTLHSHWGIGQVV). Position 102 (H102) interacts with heme b. At 112 to 120 (TDYVHGDAL) the chain is on the mitochondrial matrix side. Residue Y114 coordinates a ubiquinone. Residues 121 to 142 (QKATKAGLLAVSALTFAGLCYF) traverse the membrane as a helical segment. The Mitochondrial intermembrane segment spans residues 143 to 159 (NYHDVGICRAVAMLWKL).

Belongs to the CybS family. As to quaternary structure, component of complex II composed of four subunits: the flavoprotein (FP) SDHA, iron-sulfur protein (IP) SDHB, and a cytochrome b560 composed of SDHC and SDHD.

Its subcellular location is the mitochondrion inner membrane. It functions in the pathway carbohydrate metabolism; tricarboxylic acid cycle. Membrane-anchoring subunit of succinate dehydrogenase (SDH) that is involved in complex II of the mitochondrial electron transport chain and is responsible for transferring electrons from succinate to ubiquinone (coenzyme Q). SDH also oxidizes malate to the non-canonical enol form of oxaloacetate, enol-oxaloacetate. Enol-oxaloacetate, which is a potent inhibitor of the succinate dehydrogenase activity, is further isomerized into keto-oxaloacetate. This Rattus norvegicus (Rat) protein is Succinate dehydrogenase [ubiquinone] cytochrome b small subunit, mitochondrial (Sdhd).